The chain runs to 382 residues: GDP-mannose transporter 1 (382 aa).

Residues methionine 1–glutamine 40 are Cytoplasmic-facing. Residues leucine 41–valine 61 traverse the membrane as a helical segment. Residues methionine 62–aspartate 71 lie on the Lumenal side of the membrane. A helical membrane pass occupies residues phenylalanine 72–threonine 92. Topologically, residues cysteine 93–lysine 110 are cytoplasmic. The helical transmembrane segment at lysine 111–serine 127 threads the bilayer. Over lysine 128–serine 134 the chain is Lumenal. A helical membrane pass occupies residues isoleucine 135–tyrosine 151. The Cytoplasmic segment spans residues glycine 152–serine 160. Residues valine 161 to alanine 182 traverse the membrane as a helical segment. Topologically, residues aspartate 183–threonine 200 are lumenal. Residues leucine 201–glycine 221 traverse the membrane as a helical segment. The Cytoplasmic segment spans residues methionine 222–aspartate 233. A helical membrane pass occupies residues phenylalanine 234 to leucine 254. Topologically, residues methionine 255–glycine 274 are lumenal. The helical transmembrane segment at isoleucine 275 to tryptophan 295 threads the bilayer. The Cytoplasmic segment spans residues cysteine 296–threonine 303. A helical transmembrane segment spans residues threonine 304 to phenylalanine 324. Residues aspartate 325–proline 327 are Lumenal-facing. Residues valine 328–valine 348 form a helical membrane-spanning segment. Topologically, residues alanine 349–serine 382 are cytoplasmic. Residues lysine 358–serine 382 are disordered. Polar residues predominate over residues proline 367–serine 382.

This sequence belongs to the TPT transporter family. SLC35D subfamily. Homooligomer.

The protein localises to the golgi apparatus membrane. Its subcellular location is the cytoplasmic vesicle membrane. It localises to the endoplasmic reticulum membrane. Its function is as follows. Involved in the import of GDP-mannose from the cytoplasm into the Golgi lumen. The protein is GDP-mannose transporter 1 (gmt1) of Neosartorya fischeri (strain ATCC 1020 / DSM 3700 / CBS 544.65 / FGSC A1164 / JCM 1740 / NRRL 181 / WB 181) (Aspergillus fischerianus).